The following is a 361-amino-acid chain: Phosphoserine aminotransferase (361 aa).

L-glutamate is bound by residues Ser-9 and Arg-42. Residues 76–77, Trp-102, Thr-153, Asp-173, and Gln-196 contribute to the pyridoxal 5'-phosphate site; that span reads AR. Lys-197 bears the N6-(pyridoxal phosphate)lysine mark. A pyridoxal 5'-phosphate-binding site is contributed by 238 to 239; it reads NT.

Belongs to the class-V pyridoxal-phosphate-dependent aminotransferase family. SerC subfamily. As to quaternary structure, homodimer. It depends on pyridoxal 5'-phosphate as a cofactor.

Its subcellular location is the cytoplasm. The catalysed reaction is O-phospho-L-serine + 2-oxoglutarate = 3-phosphooxypyruvate + L-glutamate. It carries out the reaction 4-(phosphooxy)-L-threonine + 2-oxoglutarate = (R)-3-hydroxy-2-oxo-4-phosphooxybutanoate + L-glutamate. The protein operates within amino-acid biosynthesis; L-serine biosynthesis; L-serine from 3-phospho-D-glycerate: step 2/3. Its pathway is cofactor biosynthesis; pyridoxine 5'-phosphate biosynthesis; pyridoxine 5'-phosphate from D-erythrose 4-phosphate: step 3/5. Its function is as follows. Catalyzes the reversible conversion of 3-phosphohydroxypyruvate to phosphoserine and of 3-hydroxy-2-oxo-4-phosphonooxybutanoate to phosphohydroxythreonine. The protein is Phosphoserine aminotransferase of Erwinia tasmaniensis (strain DSM 17950 / CFBP 7177 / CIP 109463 / NCPPB 4357 / Et1/99).